The primary structure comprises 328 residues: Cytochrome c biogenesis protein CcsA (328 aa).

8 consecutive transmembrane segments (helical) span residues 13–33, 46–66, 73–93, 101–121, 146–166, 234–254, 263–283, and 295–315; these read ISFS…LVNL, GIVI…IYSG, LYES…VSYF, LNAI…SGLL, MVLG…LLVI, IISL…VWAN, WDPK…YLHI, and AIVA…VNLL.

Belongs to the CcmF/CycK/Ccl1/NrfE/CcsA family. In terms of assembly, may interact with Ccs1.

It is found in the plastid. Its subcellular location is the chloroplast thylakoid membrane. Functionally, required during biogenesis of c-type cytochromes (cytochrome c6 and cytochrome f) at the step of heme attachment. The polypeptide is Cytochrome c biogenesis protein CcsA (Aethionema cordifolium (Lebanon stonecress)).